The following is a 226-amino-acid chain: Insulin-like growth factor-binding protein 6 (226 aa).

The signal sequence occupies residues 1–25 (MTWDGLPTQPLLMLLMLLFAAGSES). One can recognise an IGFBP N-terminal domain in the interval 26 to 99 (ALAGCPGCGP…LIGQGRCQRA (74 aa)). 4 disulfide bridges follow: Cys30-Cys33, Cys49-Cys55, Cys63-Cys76, and Cys70-Cys96. Residues 92–148 (GQGRCQRARGPSEETTKESKPHGGASRPRDRDRQKNPRTSAAPIRPSPVQDGEMGPC) form a disordered region. A compositionally biased stretch (basic and acidic residues) spans 101–126 (GPSEETTKESKPHGGASRPRDRDRQK). The Thyroglobulin type-1 domain occupies 145 to 220 (MGPCRRHLDS…SPDGQGSSQC (76 aa)). 3 disulfide bridges follow: Cys148–Cys176, Cys187–Cys198, and Cys200–Cys220. The interval 205 to 226 (GQPLPVSPDGQGSSQCSARSSG) is disordered. Over residues 214–226 (GQGSSQCSARSSG) the composition is skewed to polar residues.

In terms of assembly, interacts (via C-terminal domain) with PHB2. O-glycosylated.

Its subcellular location is the secreted. Functionally, IGF-binding proteins prolong the half-life of the IGFs and have been shown to either inhibit or stimulate the growth promoting effects of the IGFs on cell culture. They alter the interaction of IGFs with their cell surface receptors. Activates the MAPK signaling pathway and induces cell migration. The sequence is that of Insulin-like growth factor-binding protein 6 (Igfbp6) from Rattus norvegicus (Rat).